The chain runs to 503 residues: ATP synthase subunit alpha (503 aa).

An ATP-binding site is contributed by 169-176 (GDRQTGKT).

Belongs to the ATPase alpha/beta chains family. F-type ATPases have 2 components, CF(1) - the catalytic core - and CF(0) - the membrane proton channel. CF(1) has five subunits: alpha(3), beta(3), gamma(1), delta(1), epsilon(1). CF(0) has three main subunits: a(1), b(2) and c(9-12). The alpha and beta chains form an alternating ring which encloses part of the gamma chain. CF(1) is attached to CF(0) by a central stalk formed by the gamma and epsilon chains, while a peripheral stalk is formed by the delta and b chains.

It is found in the cell membrane. It catalyses the reaction ATP + H2O + 4 H(+)(in) = ADP + phosphate + 5 H(+)(out). Functionally, produces ATP from ADP in the presence of a proton gradient across the membrane. The alpha chain is a regulatory subunit. The protein is ATP synthase subunit alpha of Macrococcus caseolyticus (strain JCSC5402) (Macrococcoides caseolyticum).